We begin with the raw amino-acid sequence, 887 residues long: Translation initiation factor IF-2 (887 aa).

Disordered regions lie at residues 31–87, 94–113, and 129–285; these read KLAQ…PRRI, SFVSEDLNSPQPPVPVDSDA, and VETE…KWRK. A compositionally biased stretch (basic and acidic residues) spans 42–59; that stretch reads SSSEKPSTKVPEKIAKEK. Composition is skewed to basic and acidic residues over residues 150–171 and 199–212; these read VVAKEPPAPKKEPEVVVKKEPP and PKKEDKPAPKEKTK. Over residues 213-223 the composition is skewed to low complexity; that stretch reads TTQTKPQQSSD. Residues 241 to 273 are compositionally biased toward basic and acidic residues; it reads YRRDVSKKSGSDFRDRAKKDDNPKAFTGRDRYG. In terms of domain architecture, tr-type G spans 393–562; sequence TRPPIVAFMG…ALQAEVLELK (170 aa). Residues 402 to 409 form a G1 region; it reads GHVDHGKT. 402–409 lines the GTP pocket; it reads GHVDHGKT. The G2 stretch occupies residues 427 to 431; that stretch reads AITQH. The tract at residues 448–451 is G3; it reads DTPG. Residues 448–452 and 502–505 each bind GTP; these read DTPGH and NKCD. Residues 502 to 505 form a G4 region; sequence NKCD. The segment at 538-540 is G5; that stretch reads SAK.

It belongs to the TRAFAC class translation factor GTPase superfamily. Classic translation factor GTPase family. IF-2 subfamily.

The protein resides in the cytoplasm. In terms of biological role, one of the essential components for the initiation of protein synthesis. Protects formylmethionyl-tRNA from spontaneous hydrolysis and promotes its binding to the 30S ribosomal subunits. Also involved in the hydrolysis of GTP during the formation of the 70S ribosomal complex. This chain is Translation initiation factor IF-2, found in Chlamydia caviae (strain ATCC VR-813 / DSM 19441 / 03DC25 / GPIC) (Chlamydophila caviae).